The sequence spans 699 residues: Integrator complex subunit 10 (699 aa).

Residues S220 and S370 each carry the phosphoserine modification. A Glycyl lysine isopeptide (Lys-Gly) (interchain with G-Cter in SUMO2) cross-link involves residue K453.

This sequence belongs to the Integrator subunit 10 family. Component of the Integrator complex, composed of core subunits INTS1, INTS2, INTS3, INTS4, INTS5, INTS6, INTS7, INTS8, INTS9/RC74, INTS10, INTS11/CPSF3L, INTS12, INTS13, INTS14 and INTS15. The core complex associates with protein phosphatase 2A subunits PPP2CA and PPP2R1A, to form the Integrator-PP2A (INTAC) complex. INTS10 is part of the tail subcomplex, composed of INTS10, INTS13, INTS14 and INTS15.

Its subcellular location is the nucleus. Functionally, component of the integrator complex, a multiprotein complex that terminates RNA polymerase II (Pol II) transcription in the promoter-proximal region of genes. The integrator complex provides a quality checkpoint during transcription elongation by driving premature transcription termination of transcripts that are unfavorably configured for transcriptional elongation: the complex terminates transcription by (1) catalyzing dephosphorylation of the C-terminal domain (CTD) of Pol II subunit POLR2A/RPB1 and SUPT5H/SPT5, (2) degrading the exiting nascent RNA transcript via endonuclease activity and (3) promoting the release of Pol II from bound DNA. The integrator complex is also involved in terminating the synthesis of non-coding Pol II transcripts, such as enhancer RNAs (eRNAs), small nuclear RNAs (snRNAs), telomerase RNAs and long non-coding RNAs (lncRNAs). Within the integrator complex, INTS10 is part of the integrator tail module that acts as a platform for the recruitment of transcription factors at promoters. May be not involved in the recruitment of cytoplasmic dynein to the nuclear envelope, probably as component of the integrator complex. The chain is Integrator complex subunit 10 (INTS10) from Macaca fascicularis (Crab-eating macaque).